The following is a 364-amino-acid chain: Putative glutamate--cysteine ligase 2-2 (364 aa).

The protein belongs to the glutamate--cysteine ligase type 2 family. YbdK subfamily.

It catalyses the reaction L-cysteine + L-glutamate + ATP = gamma-L-glutamyl-L-cysteine + ADP + phosphate + H(+). ATP-dependent carboxylate-amine ligase which exhibits weak glutamate--cysteine ligase activity. The sequence is that of Putative glutamate--cysteine ligase 2-2 from Mycobacterium sp. (strain JLS).